Consider the following 204-residue polypeptide: Methylthioribulose-1-phosphate dehydratase (204 aa).

The Zn(2+) site is built by His-95 and His-97.

This sequence belongs to the aldolase class II family. MtnB subfamily. The cofactor is Zn(2+).

The enzyme catalyses 5-(methylsulfanyl)-D-ribulose 1-phosphate = 5-methylsulfanyl-2,3-dioxopentyl phosphate + H2O. It functions in the pathway amino-acid biosynthesis; L-methionine biosynthesis via salvage pathway; L-methionine from S-methyl-5-thio-alpha-D-ribose 1-phosphate: step 2/6. Catalyzes the dehydration of methylthioribulose-1-phosphate (MTRu-1-P) into 2,3-diketo-5-methylthiopentyl-1-phosphate (DK-MTP-1-P). This is Methylthioribulose-1-phosphate dehydratase from Parvibaculum lavamentivorans (strain DS-1 / DSM 13023 / NCIMB 13966).